The following is a 227-amino-acid chain: Cytidylate kinase (227 aa).

10–18 (GPSGSGKGT) contributes to the ATP binding site.

Belongs to the cytidylate kinase family. Type 1 subfamily.

The protein localises to the cytoplasm. It carries out the reaction CMP + ATP = CDP + ADP. The enzyme catalyses dCMP + ATP = dCDP + ADP. The sequence is that of Cytidylate kinase from Acinetobacter baylyi (strain ATCC 33305 / BD413 / ADP1).